A 437-amino-acid chain; its full sequence is Repulsive guidance molecule B (437 aa).

The N-terminal stretch at 1 to 45 is a signal peptide; sequence MGLRAAPSSAAAAAAEVEQRRSPGLCPPPLELLLLLLFSLGLLHA. N-linked (GlcNAc...) asparagine glycosylation is present at N120. The segment covering 121 to 133 has biased composition (polar residues); the sequence is CSKDGPTSSTNPE. A disordered region spans residues 121–153; that stretch reads CSKDGPTSSTNPEVTHDPCNYHSHAGAREHRRG. Cystine bridges form between C139/C226 and C163/C312. N-linked (GlcNAc...) asparagine glycosylation is present at N383. The GPI-anchor amidated asparagine moiety is linked to residue N413. A propeptide spans 414-437 (removed in mature form); the sequence is GTPRGGSDLSVSLGLTCLILIVFL.

The protein belongs to the repulsive guidance molecule (RGM) family. Homooligomer. Interacts with DRGX. Interacts with BMP2 and BMP4. Interacts with the BMP type I receptors ACVR1, BMPR1A and BMPR1B and with the BMP type II receptor ACVR2B. The functional complex with its receptor NEO1/neogenin appears to be a heterotetramer with a 2:2 stoichiometry, RGM molecules acting as staples that bring two NEO1 receptors together without interacting themselves, this arrangement leads to activation of downstream signaling via RhoA. GPI-anchored. In terms of processing, autocatalytically cleaved at low pH; the two chains remain linked via two disulfide bonds.

The protein localises to the cell membrane. It localises to the membrane raft. Its function is as follows. Member of the repulsive guidance molecule (RGM) family that contributes to the patterning of the developing nervous system. Acts as a bone morphogenetic protein (BMP) coreceptor that potentiates BMP signaling. Promotes neuronal adhesion. May inhibit neurite outgrowth. The polypeptide is Repulsive guidance molecule B (Homo sapiens (Human)).